The following is a 169-amino-acid chain: NAD(P)H-quinone oxidoreductase subunit J, chloroplastic (169 aa).

The protein belongs to the complex I 30 kDa subunit family. As to quaternary structure, NDH is composed of at least 16 different subunits, 5 of which are encoded in the nucleus.

It localises to the plastid. The protein resides in the chloroplast thylakoid membrane. It carries out the reaction a plastoquinone + NADH + (n+1) H(+)(in) = a plastoquinol + NAD(+) + n H(+)(out). The catalysed reaction is a plastoquinone + NADPH + (n+1) H(+)(in) = a plastoquinol + NADP(+) + n H(+)(out). In terms of biological role, NDH shuttles electrons from NAD(P)H:plastoquinone, via FMN and iron-sulfur (Fe-S) centers, to quinones in the photosynthetic chain and possibly in a chloroplast respiratory chain. The immediate electron acceptor for the enzyme in this species is believed to be plastoquinone. Couples the redox reaction to proton translocation, and thus conserves the redox energy in a proton gradient. The chain is NAD(P)H-quinone oxidoreductase subunit J, chloroplastic from Zygnema circumcarinatum (Green alga).